Reading from the N-terminus, the 718-residue chain is Polyribonucleotide nucleotidyltransferase (718 aa).

Residues Asp497 and Asp503 each contribute to the Mg(2+) site. Positions 564-623 (PRLLTLKIEPEHIGMVIGPGGKTIKGITEQTSCKIDIADDGTVTIASSEGERAERARQMI) constitute a KH domain. The 69-residue stretch at 633 to 701 (GEVYLGRVTR…SKGRLNLTRL (69 aa)) folds into the S1 motif domain.

It belongs to the polyribonucleotide nucleotidyltransferase family. As to quaternary structure, interacts with RNase E (rne). It depends on Mg(2+) as a cofactor.

It is found in the cytoplasm. The enzyme catalyses RNA(n+1) + phosphate = RNA(n) + a ribonucleoside 5'-diphosphate. Functionally, involved in mRNA degradation. Catalyzes the phosphorolysis of single-stranded polyribonucleotides processively in the 3'- to 5'-direction. The protein is Polyribonucleotide nucleotidyltransferase of Synechocystis sp. (strain ATCC 27184 / PCC 6803 / Kazusa).